Here is a 65-residue protein sequence, read N- to C-terminus: Gallinacin-12 (65 aa).

A signal peptide spans 1-19 (MRNLCFVFIFISLLAHGST). Disulfide bonds link C25/C54, C32/C47, and C37/C55.

The protein belongs to the beta-defensin family. As to expression, expressed in the large intestine, kidney liver, gall bladder, testis, ovary and male and female reproductive tracts. Expressed in the ovarian stroma and the theca and granulosa layers of the ovarian follicle.

The protein localises to the secreted. Its subcellular location is the cytoplasmic granule. In terms of biological role, has bactericidal activity. This chain is Gallinacin-12 (GAL12), found in Gallus gallus (Chicken).